We begin with the raw amino-acid sequence, 363 residues long: Phospho-N-acetylmuramoyl-pentapeptide-transferase (363 aa).

The next 11 helical transmembrane spans lie at 27–47 (AGAACLTALAISLLLGNPLIA), 76–96 (TMGGVLILAALFGSTLLWADL), 97–117 (TDGYVWAVLLTTLSFGAVGFA), 137–157 (LGCEFAASLVGGYWMQSLMPA), 171–191 (WLLPLGFAFPLFAMITITGFG), 202–222 (GLAIVPVIIAALVFGLISYLV), 226–246 (VFADYLQLHAVPGTGELCVFC), 248–268 (ALVGAGLGFLWFNAPPAAVFM), 271–291 (TGSLSLGGALGAIAVAVKHEL), 292–312 (VLCIVGGLFVVETLSVIIQVF), and 340–360 (KIVIRFWIVSIVLGLCGLATL).

The protein belongs to the glycosyltransferase 4 family. MraY subfamily. It depends on Mg(2+) as a cofactor.

Its subcellular location is the cell inner membrane. The enzyme catalyses UDP-N-acetyl-alpha-D-muramoyl-L-alanyl-gamma-D-glutamyl-meso-2,6-diaminopimeloyl-D-alanyl-D-alanine + di-trans,octa-cis-undecaprenyl phosphate = di-trans,octa-cis-undecaprenyl diphospho-N-acetyl-alpha-D-muramoyl-L-alanyl-D-glutamyl-meso-2,6-diaminopimeloyl-D-alanyl-D-alanine + UMP. The protein operates within cell wall biogenesis; peptidoglycan biosynthesis. In terms of biological role, catalyzes the initial step of the lipid cycle reactions in the biosynthesis of the cell wall peptidoglycan: transfers peptidoglycan precursor phospho-MurNAc-pentapeptide from UDP-MurNAc-pentapeptide onto the lipid carrier undecaprenyl phosphate, yielding undecaprenyl-pyrophosphoryl-MurNAc-pentapeptide, known as lipid I. In Gluconacetobacter diazotrophicus (strain ATCC 49037 / DSM 5601 / CCUG 37298 / CIP 103539 / LMG 7603 / PAl5), this protein is Phospho-N-acetylmuramoyl-pentapeptide-transferase.